Here is a 20-residue protein sequence, read N- to C-terminus: Trypsin inhibitor (20 aa).

Residues 1–20 (APSDTTIAETLTITEEFFPD) form a disordered region.

Hemolymph.

It is found in the secreted. Its subcellular location is the extracellular space. Inhibits trypsin stoichiometrically. Also inhibits chymotrypsin very weakly. The protein is Trypsin inhibitor of Mythimna unipuncta (Armyworm moth).